Reading from the N-terminus, the 274-residue chain is MTQPAVYVVSDSTGETAELVTRAALSQFGQTPKFIHRFHHVDSSHMIEEIVDLVAVNNGIIVHTIVLESVREELNKTAQAFGVPIIDLFGPLLNQLEETYKIKPLSEPGRVRSMDEAYFNKVAAIEFAVENDDGRNPRGILQADYVLIGISRTSKTPLSQYLALKGLKIVNIPIVPEAQIPDELFEIDPQKIIGLKISKQKLTKIRQERLISIGLPGAGTYASNQRIDEELAIFDKLASKLNCFVLDVTNKAIEETANEILIHIGEIVDENLEL.

An ADP-binding site is contributed by 149-156; the sequence is GISRTSKT.

Belongs to the pyruvate, phosphate/water dikinase regulatory protein family. PDRP subfamily.

It catalyses the reaction N(tele)-phospho-L-histidyl/L-threonyl-[pyruvate, phosphate dikinase] + ADP = N(tele)-phospho-L-histidyl/O-phospho-L-threonyl-[pyruvate, phosphate dikinase] + AMP + H(+). It carries out the reaction N(tele)-phospho-L-histidyl/O-phospho-L-threonyl-[pyruvate, phosphate dikinase] + phosphate + H(+) = N(tele)-phospho-L-histidyl/L-threonyl-[pyruvate, phosphate dikinase] + diphosphate. Its function is as follows. Bifunctional serine/threonine kinase and phosphorylase involved in the regulation of the pyruvate, phosphate dikinase (PPDK) by catalyzing its phosphorylation/dephosphorylation. The protein is Putative pyruvate, phosphate dikinase regulatory protein 1 of Listeria welshimeri serovar 6b (strain ATCC 35897 / DSM 20650 / CCUG 15529 / CIP 8149 / NCTC 11857 / SLCC 5334 / V8).